A 137-amino-acid chain; its full sequence is Gonadotropin subunit beta-1 (137 aa).

Positions 1–24 are cleaved as a signal peptide; sequence MYCTHLKTLQLVVMATLWVTPVRA. 5 disulfides stabilise this stretch: cysteine 32–cysteine 78, cysteine 46–cysteine 93, cysteine 55–cysteine 108, cysteine 59–cysteine 110, and cysteine 113–cysteine 120. The N-linked (GlcNAc...) asparagine glycan is linked to asparagine 36.

It belongs to the glycoprotein hormones subunit beta family. In terms of assembly, heterodimer of an alpha and a beta chain.

It localises to the secreted. In terms of biological role, involved in gametogenesis and steroidogenesis. This is Gonadotropin subunit beta-1 (cgba) from Oncorhynchus masou (Cherry salmon).